A 138-amino-acid chain; its full sequence is Putative nickel-responsive regulator (138 aa).

Histidine 78, histidine 89, histidine 91, and cysteine 97 together coordinate Ni(2+).

It belongs to the transcriptional regulatory CopG/NikR family. Ni(2+) serves as cofactor.

Transcriptional regulator. The chain is Putative nickel-responsive regulator from Desulfovibrio desulfuricans (strain ATCC 27774 / DSM 6949 / MB).